The chain runs to 207 residues: Large ribosomal subunit protein uL3c (207 aa).

The disordered stretch occupies residues 128 to 148 (FTRGPMTHGSKNHRAPGSIGM).

It belongs to the universal ribosomal protein uL3 family. Part of the 50S ribosomal subunit.

The protein resides in the plastid. Its subcellular location is the chloroplast. One of the primary rRNA binding proteins, it binds directly near the 3'-end of the 23S rRNA, where it nucleates assembly of the 50S subunit. This Trieres chinensis (Marine centric diatom) protein is Large ribosomal subunit protein uL3c (rpl3).